The following is an 822-amino-acid chain: DNA-directed RNA polymerase subunit beta N-terminal section (822 aa).

The tract at residues Glu376–Gly408 is disordered. Residues Ser383–Ser393 show a composition bias toward low complexity.

It belongs to the RNA polymerase beta chain family. In terms of assembly, in plastids the minimal PEP RNA polymerase catalytic core is composed of four subunits: alpha, beta, beta', and beta''. When a (nuclear-encoded) sigma factor is associated with the core the holoenzyme is formed, which can initiate transcription.

The protein localises to the plastid. The protein resides in the chloroplast. The catalysed reaction is RNA(n) + a ribonucleoside 5'-triphosphate = RNA(n+1) + diphosphate. Its function is as follows. DNA-dependent RNA polymerase catalyzes the transcription of DNA into RNA using the four ribonucleoside triphosphates as substrates. The protein is DNA-directed RNA polymerase subunit beta N-terminal section (rpoB1) of Chlamydomonas reinhardtii (Chlamydomonas smithii).